The primary structure comprises 485 residues: Argininosuccinate lyase (485 aa).

It belongs to the lyase 1 family. Argininosuccinate lyase subfamily.

The protein resides in the cytoplasm. It carries out the reaction 2-(N(omega)-L-arginino)succinate = fumarate + L-arginine. It participates in amino-acid biosynthesis; L-arginine biosynthesis; L-arginine from L-ornithine and carbamoyl phosphate: step 3/3. The polypeptide is Argininosuccinate lyase (Halobacterium salinarum (strain ATCC 29341 / DSM 671 / R1)).